We begin with the raw amino-acid sequence, 434 residues long: Tubulin gamma chain (434 aa).

Residue 135–141 coordinates GTP; it reads AGGTGSG.

It belongs to the tubulin family.

It localises to the cytoplasm. The protein resides in the cytoskeleton. It is found in the microtubule organizing center. Its subcellular location is the spindle pole body. Functionally, tubulin is the major constituent of microtubules. The gamma chain is found at microtubule organizing centers (MTOC) such as the spindle poles or the centrosome, suggesting that it is involved in the minus-end nucleation of microtubule assembly. The chain is Tubulin gamma chain (TUB4) from Encephalitozoon cuniculi (strain GB-M1) (Microsporidian parasite).